The primary structure comprises 346 residues: GTPase Obg (346 aa).

Residues 1 to 158 (MFIDKAKIYV…RWIELELKLL (158 aa)) form the Obg domain. Residues 159–330 (ADVGIIGFPN…LINLIRETRD (172 aa)) form the OBG-type G domain. Residues 165-172 (GFPNAGKS), 190-194 (FTTLT), 212-215 (DIPG), 282-285 (NKID), and 311-313 (SLI) each bind GTP. Mg(2+)-binding residues include Ser-172 and Thr-192.

Belongs to the TRAFAC class OBG-HflX-like GTPase superfamily. OBG GTPase family. In terms of assembly, monomer. The cofactor is Mg(2+).

It localises to the cytoplasm. Functionally, an essential GTPase which binds GTP, GDP and possibly (p)ppGpp with moderate affinity, with high nucleotide exchange rates and a fairly low GTP hydrolysis rate. Plays a role in control of the cell cycle, stress response, ribosome biogenesis and in those bacteria that undergo differentiation, in morphogenesis control. This is GTPase Obg from Sulfurihydrogenibium sp. (strain YO3AOP1).